Consider the following 521-residue polypeptide: Probable glycine dehydrogenase (decarboxylating) subunit 2 (521 aa).

K279 carries the N6-(pyridoxal phosphate)lysine modification.

Belongs to the GcvP family. C-terminal subunit subfamily. The glycine cleavage system is composed of four proteins: P, T, L and H. In this organism, the P 'protein' is a heterodimer of two subunits. Requires pyridoxal 5'-phosphate as cofactor.

It carries out the reaction N(6)-[(R)-lipoyl]-L-lysyl-[glycine-cleavage complex H protein] + glycine + H(+) = N(6)-[(R)-S(8)-aminomethyldihydrolipoyl]-L-lysyl-[glycine-cleavage complex H protein] + CO2. The glycine cleavage system catalyzes the degradation of glycine. The P protein binds the alpha-amino group of glycine through its pyridoxal phosphate cofactor; CO(2) is released and the remaining methylamine moiety is then transferred to the lipoamide cofactor of the H protein. This is Probable glycine dehydrogenase (decarboxylating) subunit 2 from Staphylothermus marinus (strain ATCC 43588 / DSM 3639 / JCM 9404 / F1).